Consider the following 188-residue polypeptide: GMP synthase [glutamine-hydrolyzing] subunit A (188 aa).

Residues 2-188 (KVAVIYFGGQ…FKNFIKICRK (187 aa)) form the Glutamine amidotransferase type-1 domain. Cys79 acts as the Nucleophile in catalysis. Catalysis depends on residues His166 and Glu168.

As to quaternary structure, heterodimer composed of a glutamine amidotransferase subunit (A) and a GMP-binding subunit (B).

It carries out the reaction XMP + L-glutamine + ATP + H2O = GMP + L-glutamate + AMP + diphosphate + 2 H(+). Its pathway is purine metabolism; GMP biosynthesis; GMP from XMP (L-Gln route): step 1/1. Functionally, catalyzes the synthesis of GMP from XMP. This chain is GMP synthase [glutamine-hydrolyzing] subunit A, found in Sulfolobus acidocaldarius (strain ATCC 33909 / DSM 639 / JCM 8929 / NBRC 15157 / NCIMB 11770).